A 351-amino-acid polypeptide reads, in one-letter code: Short-chain dehydrogenase sdnK (351 aa).

Residues Ile-46, Thr-66, Glu-98, Tyr-224, Lys-228, and Thr-268 each contribute to the NADP(+) site. Tyr-224 functions as the Proton donor in the catalytic mechanism. Lys-228 functions as the Lowers pKa of active site Tyr in the catalytic mechanism.

This sequence belongs to the short-chain dehydrogenases/reductases (SDR) family.

It functions in the pathway antibiotic biosynthesis. Functionally, short-chain dehydrogenase; part of the gene cluster that mediates the biosynthesis of sordarin and hypoxysordarin, glycoside antibiotics with a unique tetracyclic diterpene aglycone structure. First, the geranylgeranyl diphosphate synthase sdnC constructs GGDP from farnesyl diphosphate and isopentenyl diphosphate. The diterpene cyclase sdnA then catalyzes the cyclization of GGDP to afford cycloaraneosene. Cycloaraneosene is then hydroxylated four times by the putative cytochrome P450 monooxygenases sdnB, sdnE, sdnF and sdnH to give a hydroxylated cycloaraneosene derivative such as cycloaraneosene-8,9,13,19-tetraol. Although the order of the hydroxylations is unclear, at least C8, C9 and C13 of the cycloaraneosene skeleton are hydroxylated before the sordaricin formation. Dehydration of the 13-hydroxy group of the hydroxylated cycloaraneosene derivative might be catalyzed by an unassigned hypothetical protein such as sdnG and sdnP to construct the cyclopentadiene moiety. The FAD-dependent oxidoreductase sdnN is proposed to catalyze the oxidation at C9 of the hydroxylated cycloaraneosene derivative and also catalyze the Baeyer-Villiger oxidation to give the lactone intermediate. The presumed lactone intermediate would be hydrolyzed to give an acrolein moiety and a carboxylate moiety. Then, [4+2]cycloaddition would occur between the acrolein moiety and the cyclopentadiene moiety to give sordaricin. SdnN might also be involved in the [4+2]cycloaddition after the hypothesized oxidation to accommodate the oxidized product and prompt the [4+2]cycloaddition. GDP-6-deoxy-D-altrose may be biosynthesized from GDP-D-mannose by the putative GDP-mannose-4,6-dehydratase sdnI and the short-chain dehydrogenase sdnK. The glycosyltransferase sdnJ catalyzes the attachment of 6-deoxy-D-altrose onto the 19-hydroxy group of sordaricin to give 4'-O-demethylsordarin. The methyltransferase sdnD would complete the biosynthesis of sordarin. Sordarin can be further modified into hypoxysordarin. The unique acyl chain at the 3'-hydroxy group of hypoxysordarin would be constructed by an iterative type I PKS sdnO and the trans-acting polyketide methyltransferase sdnL. SdnL would be responsible for the introduction of an alpha-methyl group of the polyketide chain. Alternatively, the beta-lactamase-like protein sdnR might be responsible for the cleavage and transfer of the polyketide chain from the PKS sdnO to sordarin. Two putative cytochrome P450 monooxygenases, sdnQ and sdnT, might catalyze the epoxidations of the polyketide chain to complete the biosynthesis of hypoxysordarin. Transcriptional regulators sdnM and sdnS are presumably encoded for the transcriptional regulation of the expression of the sdn gene cluster. The protein is Short-chain dehydrogenase sdnK of Sordaria araneosa (Pleurage araneosa).